A 415-amino-acid polypeptide reads, in one-letter code: CCA-adding enzyme (415 aa).

ATP is bound by residues Ser-52 and Arg-55. The CTP site is built by Ser-52 and Arg-55. Mg(2+) is bound by residues Asp-64, Asp-66, and Asp-116. ATP is bound by residues His-139, Lys-159, and Tyr-168. Residues His-139, Lys-159, and Tyr-168 each contribute to the CTP site.

This sequence belongs to the tRNA nucleotidyltransferase/poly(A) polymerase family. Archaeal CCA-adding enzyme subfamily. In terms of assembly, homodimer. The cofactor is Mg(2+).

The catalysed reaction is a tRNA precursor + 2 CTP + ATP = a tRNA with a 3' CCA end + 3 diphosphate. The enzyme catalyses a tRNA with a 3' CCA end + 2 CTP + ATP = a tRNA with a 3' CCACCA end + 3 diphosphate. In terms of biological role, catalyzes the addition and repair of the essential 3'-terminal CCA sequence in tRNAs without using a nucleic acid template. Adds these three nucleotides in the order of C, C, and A to the tRNA nucleotide-73, using CTP and ATP as substrates and producing inorganic pyrophosphate. tRNA 3'-terminal CCA addition is required both for tRNA processing and repair. Also involved in tRNA surveillance by mediating tandem CCA addition to generate a CCACCA at the 3' terminus of unstable tRNAs. While stable tRNAs receive only 3'-terminal CCA, unstable tRNAs are marked with CCACCA and rapidly degraded. The sequence is that of CCA-adding enzyme from Pyrobaculum neutrophilum (strain DSM 2338 / JCM 9278 / NBRC 100436 / V24Sta) (Thermoproteus neutrophilus).